We begin with the raw amino-acid sequence, 137 residues long: Large ribosomal subunit protein uL14 (137 aa).

It belongs to the universal ribosomal protein uL14 family. Component of the large ribosomal subunit. Mature ribosomes consist of a small (40S) and a large (60S) subunit. The 40S subunit contains about 32 different proteins and 1 molecule of RNA (18S). The 60S subunit contains 45 different proteins and 3 molecules of RNA (25S, 5.8S and 5S).

It is found in the cytoplasm. Functionally, component of the ribosome, a large ribonucleoprotein complex responsible for the synthesis of proteins in the cell. The small ribosomal subunit (SSU) binds messenger RNAs (mRNAs) and translates the encoded message by selecting cognate aminoacyl-transfer RNA (tRNA) molecules. The large subunit (LSU) contains the ribosomal catalytic site termed the peptidyl transferase center (PTC), which catalyzes the formation of peptide bonds, thereby polymerizing the amino acids delivered by tRNAs into a polypeptide chain. The nascent polypeptides leave the ribosome through a tunnel in the LSU and interact with protein factors that function in enzymatic processing, targeting, and the membrane insertion of nascent chains at the exit of the ribosomal tunnel. The sequence is that of Large ribosomal subunit protein uL14 from Candida albicans (strain SC5314 / ATCC MYA-2876) (Yeast).